Here is a 163-residue protein sequence, read N- to C-terminus: Bursicon (163 aa).

Residues 1–23 (MKSSVCVLLKVLACILLPGGLNA) form the signal peptide. Cystine bridges form between C39–C88, C53–C102, C63–C123, C67–C125, and C85–C128. One can recognise a CTCK domain in the interval 39 to 129 (CQVTPVIHVL…PLECMCRPCT (91 aa)).

As to quaternary structure, heterodimer of burs and pburs.

The protein localises to the secreted. Functionally, final heterodimeric neurohormone released at the end of the molting cycle, involved in the sclerotization (tanning) of the insect cuticle, melanization and wing spreading. This chain is Bursicon, found in Aedes aegypti (Yellowfever mosquito).